The chain runs to 137 residues: Basic phospholipase A2 homolog W6D49 (137 aa).

Residues 1–16 (MRTLWILAVLLVSVDG) form the signal peptide. Intrachain disulfides connect cysteine 42-cysteine 131, cysteine 44-cysteine 60, cysteine 59-cysteine 111, cysteine 65-cysteine 137, cysteine 66-cysteine 104, cysteine 73-cysteine 97, and cysteine 91-cysteine 102. The interval 121–133 (KKQQFNTGIFCSK) is important for membrane-damaging activities in eukaryotes and bacteria; heparin-binding.

Monomer. As to expression, expressed by the venom gland.

The protein resides in the secreted. With respect to regulation, heparin reduces its edema-inducing activity. In terms of biological role, snake venom phospholipase A2 homolog that lacks enzymatic activity. Shows myotoxin activities and displays edema-inducing activities. A model of myotoxic mechanism has been proposed: an apo Lys49-PLA2 is activated by the entrance of a hydrophobic molecule (e.g. fatty acid) at the hydrophobic channel of the protein leading to a reorientation of a monomer. This reorientation causes a transition between 'inactive' to 'active' states, causing alignment of C-terminal and membrane-docking sites (MDoS) side-by-side and putting the membrane-disruption sites (MDiS) in the same plane, exposed to solvent and in a symmetric position for both monomers. The MDoS region stabilizes the toxin on membrane by the interaction of charged residues with phospholipid head groups. Subsequently, the MDiS region destabilizes the membrane with penetration of hydrophobic residues. This insertion causes a disorganization of the membrane, allowing an uncontrolled influx of ions (i.e. calcium and sodium), and eventually triggering irreversible intracellular alterations and cell death. The protein is Basic phospholipase A2 homolog W6D49 of Calloselasma rhodostoma (Malayan pit viper).